An 810-amino-acid chain; its full sequence is Volume-regulated anion channel subunit LRRC8A (810 aa).

M1 carries the N-acetylmethionine modification. At M1–P22 the chain is on the cytoplasmic side. The helical transmembrane segment at W23–V47 threads the bilayer. The Extracellular segment spans residues T48–K123. 3 disulfide bridges follow: C54–C310, C57–C65, and C113–C295. Residues N66 and N83 are each glycosylated (N-linked (GlcNAc...) asparagine). The helical transmembrane segment at Y124–F142 threads the bilayer. The Cytoplasmic portion of the chain corresponds to W143–Y264. T200 bears the Phosphothreonine mark. A Phosphoserine modification is found at S202. At T215 the chain carries Phosphothreonine. Position 217 is a phosphoserine (S217). The chain crosses the membrane as a helical span at residues M265 to V286. Over H287–T316 the chain is Extracellular. A helical membrane pass occupies residues L317 to W341. The Cytoplasmic portion of the chain corresponds to W342–A810. LRR repeat units follow at residues E399 to K422, N423 to L445, E447 to L468, T469 to R492, E493 to L515, L518 to E542, L543 to V565, V567 to K589, M590 to L613, H614 to H637, H639 to L661, T662 to C684, K686 to L707, Q708 to C730, K732 to L753, T754 to C776, and L778 to R801. Residues L706–L707 carry the Di-leucine motif motif.

Belongs to the LRRC8 family. In terms of assembly, heterohexamer; oligomerizes with other LRRC8 proteins (LRRC8B, LRRC8C, LRRC8D and/or LRRC8E) to form a heterohexamer. Can form homohexamers in vitro, but these have lower conductance than heterohexamers. Detected in a channel complex that contains LRRC8A, LRRC8C and LRRC8E. In vivo, the subunit composition may depend primarily on expression levels, and heterooligomeric channels containing various proportions of the different LRRC8 proteins may coexist. Interact with GRB2. Interacts with NOX4; this interaction prevents the ubiquitin-mediated degradation of LRRC8A. N-glycosylated.

The protein localises to the cell membrane. It localises to the lysosome membrane. The enzyme catalyses chloride(in) = chloride(out). It carries out the reaction iodide(out) = iodide(in). The catalysed reaction is taurine(out) = taurine(in). It catalyses the reaction L-aspartate(out) = L-aspartate(in). The enzyme catalyses L-glutamate(out) = L-glutamate(in). It carries out the reaction myo-inositol(out) = myo-inositol(in). The catalysed reaction is 2',3'-cGAMP(out) = 2',3'-cGAMP(in). Inhibited by (4-[(2-butyl-6,7-dichloro-2-cyclopentyl-2,3-dihydro-1-oxo-1H-inden-5-yl)oxy]butanoic acid), which plugs the channel like a cork in a bottle by binding in the extracellular selectivity filter and sterically occluding ion conduction. Lipids may block conduction in closed heterohexameric channels. Functionally, essential component of the volume-regulated anion channel (VRAC, also named VSOAC channel), an anion channel required to maintain a constant cell volume in response to extracellular or intracellular osmotic changes. The VRAC channel conducts iodide better than chloride and can also conduct organic osmolytes like taurine. Mediates efflux of amino acids, such as aspartate and glutamate, in response to osmotic stress. In complex with LRRC8C or LRRC8E, acts as a transporter of immunoreactive cyclic dinucleotide GMP-AMP (2'-3'-cGAMP), an immune messenger produced in response to DNA virus in the cytosol: mediates both import and export of 2'-3'-cGAMP, thereby promoting transfer of 2'-3'-cGAMP to bystander cells. In contrast, complexes containing LRRC8D inhibit transport of 2'-3'-cGAMP. Required for in vivo channel activity, together with at least one other family member (LRRC8B, LRRC8C, LRRC8D or LRRC8E); channel characteristics depend on the precise subunit composition. Can form functional channels by itself (in vitro). Involved in B-cell development: required for the pro-B cell to pre-B cell transition. Also required for T-cell development. Required for myoblast differentiation: VRAC activity promotes membrane hyperpolarization and regulates insulin-stimulated glucose metabolism and oxygen consumption. Also acts as a regulator of glucose-sensing in pancreatic beta cells: VRAC currents, generated in response to hypotonicity- or glucose-induced beta cell swelling, depolarize cells, thereby causing electrical excitation, leading to increase glucose sensitivity and insulin secretion. Also plays a role in lysosome homeostasis by forming functional lysosomal VRAC channels in response to low cytoplasmic ionic strength condition: lysosomal VRAC channels are necessary for the formation of large lysosome-derived vacuoles, which store and then expel excess water to maintain cytosolic water homeostasis. Acts as a key factor in NLRP3 inflammasome activation by modulating itaconate efflux and mitochondria function. The protein is Volume-regulated anion channel subunit LRRC8A of Rattus norvegicus (Rat).